Here is a 229-residue protein sequence, read N- to C-terminus: UPF0173 metal-dependent hydrolase SERP1270 (229 aa).

Belongs to the UPF0173 family.

The sequence is that of UPF0173 metal-dependent hydrolase SERP1270 from Staphylococcus epidermidis (strain ATCC 35984 / DSM 28319 / BCRC 17069 / CCUG 31568 / BM 3577 / RP62A).